The sequence spans 95 residues: MLKFNEYFTGKVKSIGFDSDSIGQASVGVMEKGEYTFSTAKPEEMTVITGSLKVLIPGSSGWEVFNPGETFYVPANSEFNLQVAEASSYLCKYLS.

Belongs to the nucleoside phosphorylase PpnP family.

The catalysed reaction is a purine D-ribonucleoside + phosphate = a purine nucleobase + alpha-D-ribose 1-phosphate. It catalyses the reaction adenosine + phosphate = alpha-D-ribose 1-phosphate + adenine. The enzyme catalyses cytidine + phosphate = cytosine + alpha-D-ribose 1-phosphate. It carries out the reaction guanosine + phosphate = alpha-D-ribose 1-phosphate + guanine. The catalysed reaction is inosine + phosphate = alpha-D-ribose 1-phosphate + hypoxanthine. It catalyses the reaction thymidine + phosphate = 2-deoxy-alpha-D-ribose 1-phosphate + thymine. The enzyme catalyses uridine + phosphate = alpha-D-ribose 1-phosphate + uracil. It carries out the reaction xanthosine + phosphate = alpha-D-ribose 1-phosphate + xanthine. Its function is as follows. Catalyzes the phosphorolysis of diverse nucleosides, yielding D-ribose 1-phosphate and the respective free bases. Can use uridine, adenosine, guanosine, cytidine, thymidine, inosine and xanthosine as substrates. Also catalyzes the reverse reactions. The chain is Pyrimidine/purine nucleoside phosphorylase from Yersinia enterocolitica serotype O:8 / biotype 1B (strain NCTC 13174 / 8081).